The sequence spans 75 residues: UPF0512 protein C (75 aa).

Belongs to the UPF0512 family.

In Dictyostelium discoideum (Social amoeba), this protein is UPF0512 protein C.